The chain runs to 389 residues: Trans-2-enoyl-CoA reductase [NADH] (389 aa).

Residues Gly47–Tyr52, Phe73–Glu74, Asp110–Ala111, and Leu138–Ala139 each bind NAD(+). A substrate-binding site is contributed by Tyr224. The active-site Proton donor is the Tyr234. Residues Lys243 and Leu272 to Thr274 contribute to the NAD(+) site.

Belongs to the TER reductase family. As to quaternary structure, monomer.

The catalysed reaction is a 2,3-saturated acyl-CoA + NAD(+) = a (2E)-enoyl-CoA + NADH + H(+). It functions in the pathway lipid metabolism; fatty acid biosynthesis. Its function is as follows. Involved in the fatty acid synthesis (FAS II). Catalyzes the reduction of a carbon-carbon double bond in an enoyl moiety that is covalently linked to a coenzyme A (CoA). This is Trans-2-enoyl-CoA reductase [NADH] from Clostridium perfringens (strain ATCC 13124 / DSM 756 / JCM 1290 / NCIMB 6125 / NCTC 8237 / Type A).